Here is an 842-residue protein sequence, read N- to C-terminus: GPI ethanolamine phosphate transferase 2 (842 aa).

The N-linked (GlcNAc...) asparagine glycan is linked to N186. Residues 409-429 (YNYPLLFIGCFLSIVITGTIY) form a helical membrane-spanning segment. N441 is a glycosylation site (N-linked (GlcNAc...) asparagine). The next 2 helical transmembrane spans lie at 442 to 462 (TSILIAIAALMGISVFGSSFI) and 468 to 488 (FWWWIITGLVLLSMVNLNFSS). N-linked (GlcNAc...) asparagine glycosylation is present at N506. Residues 524–544 (GNIDALWWLNLITVTVVGLNL) traverse the membrane as a helical segment. Residue N551 is glycosylated (N-linked (GlcNAc...) asparagine). The chain crosses the membrane as a helical span at residues 554-574 (VSLLGFSDLLSMGLLSMITFL). An N-linked (GlcNAc...) asparagine glycan is attached at N578. The next 3 helical transmembrane spans lie at 615–635 (IHTALIPLARIFFKLFFAVLV), 698–718 (YLLAVIFGIILQFFTFFQSGG), and 740–760 (IYVVGLMMCISNFAPTIYWSF). N-linked (GlcNAc...) asparagine glycosylation is present at N771. Transmembrane regions (helical) follow at residues 783–803 (YPFIIIQSTIGCCLLLACIIL) and 821–841 (MVWTIFVGIIVHWIPEILLLL).

It belongs to the PIGG/PIGN/PIGO family. PIGG subfamily.

Its subcellular location is the endoplasmic reticulum membrane. It participates in glycolipid biosynthesis; glycosylphosphatidylinositol-anchor biosynthesis. Its function is as follows. Ethanolamine phosphate transferase involved in glycosylphosphatidylinositol-anchor biosynthesis. Transfers ethanolamine phosphate to the GPI second mannose. This Candida glabrata (strain ATCC 2001 / BCRC 20586 / JCM 3761 / NBRC 0622 / NRRL Y-65 / CBS 138) (Yeast) protein is GPI ethanolamine phosphate transferase 2 (LAS21).